Here is a 175-residue protein sequence, read N- to C-terminus: Transcription factor E (175 aa).

An HTH TFE/IIEalpha-type domain is found at 4-88 (AEDLFINLAK…YWKPNIDQIN (85 aa)).

This sequence belongs to the TFE family. As to quaternary structure, monomer. Interaction with RNA polymerase subunits RpoF and RpoE is necessary for Tfe stimulatory transcription activity. Able to interact with Tbp and RNA polymerase in the absence of DNA promoter. Interacts both with the preinitiation and elongation complexes.

Transcription factor that plays a role in the activation of archaeal genes transcribed by RNA polymerase. Facilitates transcription initiation by enhancing TATA-box recognition by TATA-box-binding protein (Tbp), and transcription factor B (Tfb) and RNA polymerase recruitment. Not absolutely required for transcription in vitro, but particularly important in cases where Tbp or Tfb function is not optimal. It dynamically alters the nucleic acid-binding properties of RNA polymerases by stabilizing the initiation complex and destabilizing elongation complexes. Seems to translocate with the RNA polymerase following initiation and acts by binding to the non template strand of the transcription bubble in elongation complexes. This Saccharolobus islandicus (strain Y.N.15.51 / Yellowstone #2) (Sulfolobus islandicus) protein is Transcription factor E.